Consider the following 217-residue polypeptide: Probable transaldolase (217 aa).

K83 acts as the Schiff-base intermediate with substrate in catalysis.

The protein belongs to the transaldolase family. Type 3B subfamily.

Its subcellular location is the cytoplasm. It carries out the reaction D-sedoheptulose 7-phosphate + D-glyceraldehyde 3-phosphate = D-erythrose 4-phosphate + beta-D-fructose 6-phosphate. It participates in carbohydrate degradation; pentose phosphate pathway; D-glyceraldehyde 3-phosphate and beta-D-fructose 6-phosphate from D-ribose 5-phosphate and D-xylulose 5-phosphate (non-oxidative stage): step 2/3. Transaldolase is important for the balance of metabolites in the pentose-phosphate pathway. The polypeptide is Probable transaldolase (Coprothermobacter proteolyticus (strain ATCC 35245 / DSM 5265 / OCM 4 / BT)).